The primary structure comprises 75 residues: Sec-independent protein translocase protein TatA (75 aa).

A helical transmembrane segment spans residues 1–21 (MGSMSIWHWIVVLAVVLLLFG). A disordered region spans residues 43–75 (MAEDDDAPAKPAEPPRAVPHQATPAPESEKKAV).

The protein belongs to the TatA/E family. As to quaternary structure, the Tat system comprises two distinct complexes: a TatABC complex, containing multiple copies of TatA, TatB and TatC subunits, and a separate TatA complex, containing only TatA subunits. Substrates initially bind to the TatABC complex, which probably triggers association of the separate TatA complex to form the active translocon.

The protein resides in the cell inner membrane. Part of the twin-arginine translocation (Tat) system that transports large folded proteins containing a characteristic twin-arginine motif in their signal peptide across membranes. TatA could form the protein-conducting channel of the Tat system. This is Sec-independent protein translocase protein TatA from Azorhizobium caulinodans (strain ATCC 43989 / DSM 5975 / JCM 20966 / LMG 6465 / NBRC 14845 / NCIMB 13405 / ORS 571).